We begin with the raw amino-acid sequence, 450 residues long: ATP-dependent protease ATPase subunit HslU (450 aa).

Residues Val-29, 71-76 (GVGKTE), Asp-261, Glu-328, and Arg-400 contribute to the ATP site.

This sequence belongs to the ClpX chaperone family. HslU subfamily. A double ring-shaped homohexamer of HslV is capped on each side by a ring-shaped HslU homohexamer. The assembly of the HslU/HslV complex is dependent on binding of ATP.

Its subcellular location is the cytoplasm. ATPase subunit of a proteasome-like degradation complex; this subunit has chaperone activity. The binding of ATP and its subsequent hydrolysis by HslU are essential for unfolding of protein substrates subsequently hydrolyzed by HslV. HslU recognizes the N-terminal part of its protein substrates and unfolds these before they are guided to HslV for hydrolysis. The polypeptide is ATP-dependent protease ATPase subunit HslU (Rickettsia africae (strain ESF-5)).